Reading from the N-terminus, the 502-residue chain is DnaJ homolog subfamily C member 3 homolog (502 aa).

The signal sequence occupies residues 1 to 25 (MIVNKKYFLLICIIILISINCLVLA). 8 TPR repeats span residues 29 to 62 (IENF…IGSD), 69 to 102 (VSLL…NPDN), 103 to 136 (IHAR…RPDN), 184 to 217 (KEVR…EPSS), 218 to 251 (VAAL…DPDN), 264 to 297 (FEKS…EPNS), 302 to 335 (TPLY…DELN), and 336 to 369 (ADAL…KPND). N-linked (GlcNAc...) asparagine glycosylation occurs at Asn-51. A disulfide bridge connects residues Cys-309 and Cys-325. Positions 390–457 (DYYKILGIQK…EKRKRYDMGE (68 aa)) constitute a J domain.

It localises to the secreted. The protein localises to the endoplasmic reticulum lumen. In terms of biological role, may be involved in the unfolded protein response (UPR) during ER stress. This is DnaJ homolog subfamily C member 3 homolog (dnajc3) from Dictyostelium discoideum (Social amoeba).